A 426-amino-acid polypeptide reads, in one-letter code: Probable imidazolonepropionase (426 aa).

Residues Tyr159 and His192 each contribute to the 4-imidazolone-5-propanoate site. Tyr159 contributes to the N-formimidoyl-L-glutamate binding site. Fe(3+) is bound at residue His260. His260 contacts Zn(2+). A 4-imidazolone-5-propanoate-binding site is contributed by Glu263. Asp334 is a Fe(3+) binding site. Residue Asp334 coordinates Zn(2+). Asn336 serves as a coordination point for N-formimidoyl-L-glutamate.

The protein belongs to the metallo-dependent hydrolases superfamily. HutI family. It depends on Zn(2+) as a cofactor. Requires Fe(3+) as cofactor.

The enzyme catalyses 4-imidazolone-5-propanoate + H2O = N-formimidoyl-L-glutamate. It participates in amino-acid degradation; L-histidine degradation into L-glutamate; N-formimidoyl-L-glutamate from L-histidine: step 3/3. The chain is Probable imidazolonepropionase (Amdhd1) from Mus musculus (Mouse).